Here is a 410-residue protein sequence, read N- to C-terminus: Putative competence-damage inducible protein (410 aa).

The protein belongs to the CinA family.

The polypeptide is Putative competence-damage inducible protein (Clostridium beijerinckii (strain ATCC 51743 / NCIMB 8052) (Clostridium acetobutylicum)).